We begin with the raw amino-acid sequence, 206 residues long: Large ribosomal subunit protein uL4 (206 aa).

Belongs to the universal ribosomal protein uL4 family. In terms of assembly, part of the 50S ribosomal subunit.

Functionally, one of the primary rRNA binding proteins, this protein initially binds near the 5'-end of the 23S rRNA. It is important during the early stages of 50S assembly. It makes multiple contacts with different domains of the 23S rRNA in the assembled 50S subunit and ribosome. In terms of biological role, forms part of the polypeptide exit tunnel. In Rhodopseudomonas palustris (strain BisA53), this protein is Large ribosomal subunit protein uL4.